The primary structure comprises 256 residues: uncharacterized protein (256 aa).

Residues 1–22 form the signal peptide; the sequence is MGYLKRFALYISVMILIFAIAG. Residue Cys23 is the site of N-palmitoyl cysteine attachment. The S-diacylglycerol cysteine moiety is linked to residue Cys23.

This sequence belongs to the staphylococcal tandem lipoprotein family.

The protein resides in the cell membrane. This is an uncharacterized protein from Staphylococcus aureus (strain COL).